Consider the following 586-residue polypeptide: Alanine racemase ungC (586 aa).

The interval 187-206 (RVGALPAAASTASPMGSSLP) is disordered. The span at 196–206 (STASPMGSSLP) shows a compositional bias: polar residues.

The protein belongs to the trans-sulfuration enzymes family. Requires pyridoxal 5'-phosphate as cofactor.

The catalysed reaction is L-alanine = D-alanine. It participates in secondary metabolite biosynthesis. Functionally, alanine racemase; part of the gene cluster that mediates the biosynthesis of the unguisins, gamma-aminobutyric acid (GABA)-containing fungal cyclic heptapeptides with the amino acid sequence cyclo-(D-Ala1-D-Val2-L-Phe3-D-Val4-D-Ala5-D-Trp6-GABA7) for unguisin A and cyclo-(D-Ala1-D-Val2-L-Leu3-D-Val4-D-Ala5-D-Trp6-GABA7) for unguisin B. Within the pathway, the alanine racemase ungC catalyzes the interconversion of L-alanine and D-alanine, providing the D-alanine which is accepted by the first adenylation domain of the nonribosomal peptide synthetase (NRPS) ungA. UngA is the main enzyme within the cluster which condenses the 7 residues using its respective 7 modules. The terminal condensation domain (Ct) is involved in cyclization with D-alanine and thereby releasing of unguisins A and B. Finally, the hydrolase ungD catalyzes the hydrolysis between the D-tryptophan and GABA residues of unguisins A and B to produce the corresponding linear peptides. The polypeptide is Alanine racemase ungC (Aspergillus violaceofuscus (strain CBS 115571)).